We begin with the raw amino-acid sequence, 403 residues long: Adenylate cyclase (403 aa).

Residues 1-16 (MSTEHTNTPRADSPQS) are compositionally biased toward polar residues. A disordered region spans residues 1–37 (MSTEHTNTPRADSPQSAAEAVRGARQHAPAATPAESD). A pyruvate binding region spans residues 31–60 (ATPAESDPILELAEAMEGPLRIPAHTPEAV). Positions 238–347 (AVGFADLVSY…PTVNMAARLT (110 aa)) constitute a Guanylate cyclase domain. Asp243 and Asp287 together coordinate Mg(2+).

Belongs to the adenylyl cyclase class-3 family. As to quaternary structure, homodimer. It depends on Mg(2+) as a cofactor.

It is found in the cytoplasm. It catalyses the reaction ATP = 3',5'-cyclic AMP + diphosphate. Pyruvate-stimulated. In terms of biological role, plays essential roles in regulation of cellular metabolism by catalyzing the synthesis of a second messenger, cAMP. The sequence is that of Adenylate cyclase (cya) from Glutamicibacter nicotianae (Arthrobacter nicotianae).